Reading from the N-terminus, the 315-residue chain is Manganese-dependent 2,3-dihydroxybiphenyl 1,2-dioxygenase (315 aa).

VOC domains follow at residues 7–121 (KFGH…IYYD) and 150–273 (RIDH…LFSG). Residues His153, His216, and Glu269 each coordinate Mn(2+).

Belongs to the extradiol ring-cleavage dioxygenase family. Homotetramer. The cofactor is Mn(2+).

The catalysed reaction is biphenyl-2,3-diol + O2 = 2-hydroxy-6-oxo-6-phenylhexa-2,4-dienoate + H(+). It functions in the pathway xenobiotic degradation; biphenyl degradation; 2-hydroxy-2,4-pentadienoate and benzoate from biphenyl: step 3/4. Functionally, catalyzes the meta-cleavage of the hydroxylated biphenyl ring. The enzyme can oxidize a wide range of substrates, and the substrate preference order is 2,3-dihydroxybiphenyl &gt; 3-methylcatechol &gt; catechol &gt; 4-methylcatechol &gt; 4-chlorocatechol. The polypeptide is Manganese-dependent 2,3-dihydroxybiphenyl 1,2-dioxygenase (bphC) (Geobacillus genomosp. 3).